The primary structure comprises 906 residues: Formin-like protein 16 (906 aa).

Residues 1–28 (MAPAPSPTPLPLFLLLLLLVGVAPLAAA) form the signal peptide. Positions 34–76 (QTRFPSTRTPAFATPPPITSPSPSPGTPTATPSSSPPSSSGKR) are disordered. Residues 46–59 (ATPPPITSPSPSPG) are compositionally biased toward pro residues. The span at 60 to 73 (TPTATPSSSPPSSS) shows a compositional bias: low complexity. The chain crosses the membrane as a helical span at residues 81-101 (VAVVSTALSSFAVSGLAFFLF). 6 disordered regions span residues 113–149 (AGGAGQHYGGAQGGALTGKRPEREPKRPARGNMVDEN), 161–223 (KEGD…SLDS), 250–404 (AYAR…DQQA), 451–474 (RKTKPADSKDASGGSTSAGLGRSN), 677–702 (GSLAKSTDGGNPAASSTSQGPSREER), and 834–906 (LQQQ…SDEE). The segment covering 114-128 (GGAGQHYGGAQGGAL) has biased composition (gly residues). Positions 174–185 (SRRPPQPPPPRP) are enriched in pro residues. Residues 186-196 (YRAERRQDAHE) show a composition bias toward basic and acidic residues. Residues 270 to 294 (SPSPAPAPAARPASPSPSLPLPPGR) show a composition bias toward pro residues. The span at 295-310 (ESPSRPQSIAAAAVAS) shows a compositional bias: low complexity. Positions 311–383 (PAPPPPPPPK…KGGPPPPPPK (73 aa)) are enriched in pro residues. The FH2 domain maps to 396-849 (PTGSADQQAK…PTPPPSSSQP (454 aa)). Polar residues-rich tracts occupy residues 463–474 (GGSTSAGLGRSN) and 677–697 (GSLAKSTDGGNPAASSTSQGP). The span at 847-866 (SQPAAPAATTKGAADDAPAP) shows a compositional bias: low complexity.

This sequence belongs to the formin-like family. Class-I subfamily.

It is found in the membrane. The polypeptide is Formin-like protein 16 (FH16) (Oryza sativa subsp. japonica (Rice)).